The chain runs to 215 residues: Large ribosomal subunit protein uL16 (215 aa).

It belongs to the universal ribosomal protein uL16 family. Component of the small ribosomal subunit. Mature ribosomes consist of a small (40S) and a large (60S) subunit. The 40S subunit contains about 33 different proteins and 1 molecule of RNA (18S). The 60S subunit contains about 49 different proteins and 3 molecules of RNA (25S, 5.8S and 5S).

The chain is Large ribosomal subunit protein uL16 (RPL10) from Euglena gracilis.